The primary structure comprises 79 residues: ATP synthase subunit c (79 aa).

2 consecutive transmembrane segments (helical) span residues 11–31 (IAAA…IGIL) and 53–73 (FFIV…LSLY).

This sequence belongs to the ATPase C chain family. F-type ATPases have 2 components, F(1) - the catalytic core - and F(0) - the membrane proton channel. F(1) has five subunits: alpha(3), beta(3), gamma(1), delta(1), epsilon(1). F(0) has three main subunits: a(1), b(2) and c(10-14). The alpha and beta chains form an alternating ring which encloses part of the gamma chain. F(1) is attached to F(0) by a central stalk formed by the gamma and epsilon chains, while a peripheral stalk is formed by the delta and b chains.

The protein resides in the cell inner membrane. Functionally, f(1)F(0) ATP synthase produces ATP from ADP in the presence of a proton or sodium gradient. F-type ATPases consist of two structural domains, F(1) containing the extramembraneous catalytic core and F(0) containing the membrane proton channel, linked together by a central stalk and a peripheral stalk. During catalysis, ATP synthesis in the catalytic domain of F(1) is coupled via a rotary mechanism of the central stalk subunits to proton translocation. Its function is as follows. Key component of the F(0) channel; it plays a direct role in translocation across the membrane. A homomeric c-ring of between 10-14 subunits forms the central stalk rotor element with the F(1) delta and epsilon subunits. The protein is ATP synthase subunit c of Blochmanniella floridana.